The following is a 241-amino-acid chain: 1-(5-phosphoribosyl)-5-[(5-phosphoribosylamino)methylideneamino] imidazole-4-carboxamide isomerase (241 aa).

The active-site Proton acceptor is D10. Residue D129 is the Proton donor of the active site.

Belongs to the HisA/HisF family.

The protein resides in the cytoplasm. The catalysed reaction is 1-(5-phospho-beta-D-ribosyl)-5-[(5-phospho-beta-D-ribosylamino)methylideneamino]imidazole-4-carboxamide = 5-[(5-phospho-1-deoxy-D-ribulos-1-ylimino)methylamino]-1-(5-phospho-beta-D-ribosyl)imidazole-4-carboxamide. Its pathway is amino-acid biosynthesis; L-histidine biosynthesis; L-histidine from 5-phospho-alpha-D-ribose 1-diphosphate: step 4/9. The chain is 1-(5-phosphoribosyl)-5-[(5-phosphoribosylamino)methylideneamino] imidazole-4-carboxamide isomerase from Salinispora tropica (strain ATCC BAA-916 / DSM 44818 / JCM 13857 / NBRC 105044 / CNB-440).